The following is a 382-amino-acid chain: tRNA (guanine(37)-N(1))-methyltransferase (382 aa).

Residues histidine 205, 243 to 244 (DL), 269 to 270 (DA), and asparagine 291 contribute to the S-adenosyl-L-methionine site.

The protein belongs to the class I-like SAM-binding methyltransferase superfamily. TRM5/TYW2 family. Monomer.

The protein resides in the mitochondrion matrix. Its subcellular location is the nucleus. The protein localises to the cytoplasm. It catalyses the reaction guanosine(37) in tRNA + S-adenosyl-L-methionine = N(1)-methylguanosine(37) in tRNA + S-adenosyl-L-homocysteine + H(+). Its function is as follows. Specifically methylates the N1 position of guanosine-37 in various cytoplasmic and mitochondrial tRNAs. Methylation is not dependent on the nature of the nucleoside 5' of the target nucleoside. This is the first step in the biosynthesis of wybutosine (yW), a modified base adjacent to the anticodon of tRNAs and required for accurate decoding. The chain is tRNA (guanine(37)-N(1))-methyltransferase from Entamoeba histolytica (strain ATCC 30459 / HM-1:IMSS / ABRM).